A 346-amino-acid chain; its full sequence is 3 beta-hydroxysteroid dehydrogenase/Delta 5--&gt;4-isomerase (346 aa).

Tyr-147 acts as the Proton acceptor in catalysis. Lys-151 provides a ligand contact to NAD(+).

This sequence belongs to the 3-beta-HSD family.

It catalyses the reaction a 3beta-hydroxy-Delta(5)-steroid + NAD(+) = a 3-oxo-Delta(5)-steroid + NADH + H(+). The catalysed reaction is a 3-oxo-Delta(5)-steroid = a 3-oxo-Delta(4)-steroid. It participates in lipid metabolism; steroid biosynthesis. Its function is as follows. Catalyzes the oxidative conversion of Delta(5)-ene-3-beta-hydroxy steroid, and the oxidative conversion of ketosteroids. The 3-beta-HSD enzymatic system plays a crucial role in the biosynthesis of all classes of hormonal steroids. During viral infection, steroid production contributes to virulence by inhibiting the host inflammatory response. The protein is 3 beta-hydroxysteroid dehydrogenase/Delta 5--&gt;4-isomerase (OPG174) of Monkeypox virus.